The following is an 857-amino-acid chain: DNA gyrase subunit A (857 aa).

The Topo IIA-type catalytic domain occupies 39–507; that stretch reads LPDVRDGLKP…YEGDMSIEDL (469 aa). Residue tyrosine 127 is the O-(5'-phospho-DNA)-tyrosine intermediate of the active site. The short motif at 534-540 is the GyrA-box element; that stretch reads QKRGGKG. The disordered stretch occupies residues 825 to 857; sequence REAEEVDGDVAVDETAEGAATTGTDEGEAPSAE. Residues 828 to 840 show a composition bias toward acidic residues; the sequence is EEVDGDVAVDETA.

This sequence belongs to the type II topoisomerase GyrA/ParC subunit family. Heterotetramer, composed of two GyrA and two GyrB chains. In the heterotetramer, GyrA contains the active site tyrosine that forms a transient covalent intermediate with DNA, while GyrB binds cofactors and catalyzes ATP hydrolysis.

It is found in the cytoplasm. The catalysed reaction is ATP-dependent breakage, passage and rejoining of double-stranded DNA.. In terms of biological role, a type II topoisomerase that negatively supercoils closed circular double-stranded (ds) DNA in an ATP-dependent manner to modulate DNA topology and maintain chromosomes in an underwound state. Negative supercoiling favors strand separation, and DNA replication, transcription, recombination and repair, all of which involve strand separation. Also able to catalyze the interconversion of other topological isomers of dsDNA rings, including catenanes and knotted rings. Type II topoisomerases break and join 2 DNA strands simultaneously in an ATP-dependent manner. The chain is DNA gyrase subunit A from Streptomyces coelicolor (strain ATCC BAA-471 / A3(2) / M145).